The following is a 266-amino-acid chain: Ciliary microtubule inner protein 4 (266 aa).

2 stretches are compositionally biased toward polar residues: residues 1–15 and 24–38; these read MELS…LTRT and QDMN…SLDN. The interval 1-124 is disordered; it reads MELSHRQGTT…SPEQRTVPLS (124 aa). Positions 47–63 are enriched in low complexity; the sequence is LSQSPLGSSLGQGYLET. Over residues 81–102 the composition is skewed to basic and acidic residues; that stretch reads HPEDLKKGASRSSSRDARETFR.

In terms of tissue distribution, only detected in testis, in the spermatids and sperm within the seminiferous tubules (at protein level).

The protein resides in the cytoplasmic vesicle. It is found in the secretory vesicle. The protein localises to the acrosome. It localises to the cell projection. Its subcellular location is the cilium. The protein resides in the flagellum. Seems to be associated with spermiogenesis but is not essential for sperm development and male fertility. This is Ciliary microtubule inner protein 4 (Cimip4) from Mus musculus (Mouse).